A 210-amino-acid polypeptide reads, in one-letter code: ATP-dependent Clp protease proteolytic subunit (210 aa).

The Nucleophile role is filled by Ser-114. Residue His-139 is part of the active site.

It belongs to the peptidase S14 family. As to quaternary structure, fourteen ClpP subunits assemble into 2 heptameric rings which stack back to back to give a disk-like structure with a central cavity, resembling the structure of eukaryotic proteasomes.

It is found in the cytoplasm. It carries out the reaction Hydrolysis of proteins to small peptides in the presence of ATP and magnesium. alpha-casein is the usual test substrate. In the absence of ATP, only oligopeptides shorter than five residues are hydrolyzed (such as succinyl-Leu-Tyr-|-NHMec, and Leu-Tyr-Leu-|-Tyr-Trp, in which cleavage of the -Tyr-|-Leu- and -Tyr-|-Trp bonds also occurs).. Its function is as follows. Cleaves peptides in various proteins in a process that requires ATP hydrolysis. Has a chymotrypsin-like activity. Plays a major role in the degradation of misfolded proteins. This chain is ATP-dependent Clp protease proteolytic subunit, found in Janthinobacterium sp. (strain Marseille) (Minibacterium massiliensis).